A 279-amino-acid chain; its full sequence is Methylthioribulose-1-phosphate dehydratase (279 aa).

Residue Cys-132 participates in substrate binding. 2 residues coordinate Zn(2+): His-150 and His-152. Glu-175 serves as the catalytic Proton donor/acceptor. His-240 lines the Zn(2+) pocket.

The protein belongs to the aldolase class II family. MtnB subfamily. Zn(2+) serves as cofactor.

It is found in the cytoplasm. It carries out the reaction 5-(methylsulfanyl)-D-ribulose 1-phosphate = 5-methylsulfanyl-2,3-dioxopentyl phosphate + H2O. Its pathway is amino-acid biosynthesis; L-methionine biosynthesis via salvage pathway; L-methionine from S-methyl-5-thio-alpha-D-ribose 1-phosphate: step 2/6. In terms of biological role, catalyzes the dehydration of methylthioribulose-1-phosphate (MTRu-1-P) into 2,3-diketo-5-methylthiopentyl-1-phosphate (DK-MTP-1-P). The sequence is that of Methylthioribulose-1-phosphate dehydratase from Candida tropicalis (strain ATCC MYA-3404 / T1) (Yeast).